Here is a 196-residue protein sequence, read N- to C-terminus: Nucleoid occlusion factor SlmA (196 aa).

An HTH tetR-type domain is found at 7-68; that stretch reads TNRREEILQA…GLIEFIEDSI (62 aa). The H-T-H motif DNA-binding region spans 31-50; that stretch reads TTAKLAAQVGVSEAALYRHF. Positions 115–142 form a coiled coil; the sequence is EQDRLQSRINQLFERIETQLRQVLRERK.

It belongs to the nucleoid occlusion factor SlmA family. Homodimer. Interacts with FtsZ.

The protein localises to the cytoplasm. Its subcellular location is the nucleoid. In terms of biological role, required for nucleoid occlusion (NO) phenomenon, which prevents Z-ring formation and cell division over the nucleoid. Acts as a DNA-associated cell division inhibitor that binds simultaneously chromosomal DNA and FtsZ, and disrupts the assembly of FtsZ polymers. SlmA-DNA-binding sequences (SBS) are dispersed on non-Ter regions of the chromosome, preventing FtsZ polymerization at these regions. This Photobacterium profundum (strain SS9) protein is Nucleoid occlusion factor SlmA.